A 798-amino-acid polypeptide reads, in one-letter code: Type 2 DNA topoisomerase 6 subunit B (798 aa).

Residues Asn60, Asp91, 112 to 113, and 122 to 129 each bind ATP; these read SR and GQQGIGIS. Positions 221–233 are enriched in basic and acidic residues; it reads EPEDSFKSERATE. The segment at 221-245 is disordered; the sequence is EPEDSFKSERATEELPPETEEIRPH. Lys629 contacts ATP.

It belongs to the TOP6B family. As to quaternary structure, homodimer. Heterotetramer of two Top6A and two Top6B chains.

The catalysed reaction is ATP-dependent breakage, passage and rejoining of double-stranded DNA.. Relaxes both positive and negative superturns and exhibits a strong decatenase activity. This Natronomonas pharaonis (strain ATCC 35678 / DSM 2160 / CIP 103997 / JCM 8858 / NBRC 14720 / NCIMB 2260 / Gabara) (Halobacterium pharaonis) protein is Type 2 DNA topoisomerase 6 subunit B.